The following is a 151-amino-acid chain: Caveolin-3 (151 aa).

Over 1–83 the chain is Cytoplasmic; sequence MMAEERTDLE…RLLSTLLGVP (83 aa). Residue lysine 38 forms a Glycyl lysine isopeptide (Lys-Gly) (interchain with G-Cter in SUMO3) linkage. The required for interaction with DAG1 stretch occupies residues 64–114; sequence TFTVSKYWCYRLLSTLLGVPLALLWGFLFACISFCHIWAVVPCIKSYLIEI. The helical intramembrane region spans 84-104; the sequence is LALLWGFLFACISFCHIWAVV. Residues 105–151 are Cytoplasmic-facing; sequence PCIKSYLIEIQCISHIYSLCIRTFCNPVFAALGQVCSNIKVMLRKEV.

This sequence belongs to the caveolin family. In terms of assembly, homooligomer. Interacts with DYSF. Interacts with DLG1 and KCNA5; forms a ternary complex. Interacts with DAG1 (via its C-terminal); the interaction prevents binding of DAG1 with DMD. Interacts with TRIM72. Interacts with MUSK; may regulate MUSK signaling. Interacts with POPDC1. Interacts with CAVIN1, CAVIN2 and CAVIN4. Post-translationally, sumoylation with SUMO3 by PIAS4 may reduce agonist-induced internalization and desensitization of adrenergic receptor ABRD2. As to expression, expressed specifically in skeletal muscle and heart.

It localises to the golgi apparatus membrane. Its subcellular location is the cell membrane. The protein resides in the membrane. The protein localises to the caveola. It is found in the sarcolemma. In terms of biological role, may act as a scaffolding protein within caveolar membranes. Interacts directly with G-protein alpha subunits and can functionally regulate their activity. May also regulate voltage-gated potassium channels. Plays a role in the sarcolemma repair mechanism of both skeletal muscle and cardiomyocytes that permits rapid resealing of membranes disrupted by mechanical stress. Mediates the recruitment of CAVIN2 and CAVIN3 proteins to the caveolae. The sequence is that of Caveolin-3 (CAV3) from Sus scrofa (Pig).